The chain runs to 570 residues: Periplasmic trehalase (570 aa).

Positions 1-34 (MITPALRHSGTLSFAIKLTVASTLLTFASLSAHA) are cleaved as a signal peptide. Substrate contacts are provided by residues arginine 157, 164–165 (WD), asparagine 201, 210–212 (RSQ), 282–284 (RPE), and glycine 315. Active-site proton donor/acceptor residues include aspartate 317 and glutamate 501. Glutamate 516 contacts substrate. The disordered stretch occupies residues 542–570 (KPCDSVPATRPAAPGASQPAPQKQVETTP). Over residues 552 to 570 (PAAPGASQPAPQKQVETTP) the composition is skewed to low complexity.

This sequence belongs to the glycosyl hydrolase 37 family. As to quaternary structure, monomer.

The protein localises to the periplasm. It carries out the reaction alpha,alpha-trehalose + H2O = alpha-D-glucose + beta-D-glucose. In terms of biological role, provides the cells with the ability to utilize trehalose at high osmolarity by splitting it into glucose molecules that can subsequently be taken up by the phosphotransferase-mediated uptake system. The chain is Periplasmic trehalase from Citrobacter koseri (strain ATCC BAA-895 / CDC 4225-83 / SGSC4696).